The following is a 307-amino-acid chain: Nuclear polyadenylated RNA-binding protein nab2 (307 aa).

Residues 102–135 (STDKSQQSFSVPETSIQPQSSQTPNITSLREEKE) are disordered. A compositionally biased stretch (polar residues) spans 105-129 (KSQQSFSVPETSIQPQSSQTPNITS). 3 C3H1-type zinc fingers span residues 178 to 202 (TQEVPLCKYADKCSRANCIFAHPTP), 217 to 232 (CASGKECKAADCVKGH), and 254 to 268 (CKYKPCLNPACRFIH). A disordered region spans residues 274–307 (NMTWRPPSKTEETSLSERSFAVNESEEQLHVPSV).

It belongs to the ZC3H14 family.

The protein resides in the nucleus. RNA-binding protein involved in RNA processing. Acts as a regulator of mRNA stability: binds to mRNAs and pre-mRNAs, preventing their degradation. Involved in the biogenesis of circular RNAs (circRNAs) which are produced by back-splicing circularization of pre-mRNAs. This is Nuclear polyadenylated RNA-binding protein nab2 from Schizosaccharomyces pombe (strain 972 / ATCC 24843) (Fission yeast).